The primary structure comprises 1032 residues: Connector enhancer of kinase suppressor of ras 2 (1032 aa).

An SAM domain is found at 11-76 (WSPSQVVDWM…LEAVDLLCAL (66 aa)). S12 bears the Phosphoserine mark. Residues 84–178 (NLKTLSHKLN…TIVQQDCTVY (95 aa)) form the CRIC domain. Positions 215–297 (VIQLANIKPS…GVILTLKKRP (83 aa)) constitute a PDZ domain. Residues 324–340 (RSPTSSVATPSSTISTP) are compositionally biased toward low complexity. The segment at 324–349 (RSPTSSVATPSSTISTPTKRDSSALQ) is disordered. Residues 332–515 (TPSSTISTPT…PTHYSLLPSL (184 aa)) enclose the DUF1170 domain. 2 positions are modified to phosphoserine: S338 and S390. Residues 480–509 (EEYMFQRNSKKDTGKKSKKKGDKSTSPTHY) form a disordered region. The region spanning 570-669 (RGDCEGWLWK…WLNRINMLTA (100 aa)) is the PH domain. The interval 682–766 (DYWSESDKEE…PIRKTASQRR (85 aa)) is disordered. Residue Y683 is modified to Phosphotyrosine. Positions 683 to 693 (YWSESDKEEAD) are enriched in acidic residues. S685 and S687 each carry phosphoserine. Over residues 701-714 (DSPPPPYDTYPRPP) the composition is skewed to pro residues. The span at 730-740 (LSSTETSQSQS) shows a compositional bias: low complexity. Phosphoserine is present on residues S756 and S767. Residues 866-900 (DPQDDIQPPEVEEEEEEEEEEAAGENIGEKNENRE) are disordered. A coiled-coil region spans residues 874-917 (PEVEEEEEEEEEEAAGENIGEKNENREEKLGDSLQDLYRALEEA). A compositionally biased stretch (acidic residues) spans 875–888 (EVEEEEEEEEEEAA). At S906 the chain carries Phosphoserine.

This sequence belongs to the CNKSR family. In terms of assembly, interacts with RAF1, RAB2L and RAL GTPase proteins. Interacts with DLG4 and AIP1. Post-translationally, phosphorylated on tyrosine. In terms of tissue distribution, expressed in neurons and localized in the cell body and neurites.

It localises to the cytoplasm. The protein resides in the membrane. In terms of biological role, may function as an adapter protein or regulator of Ras signaling pathways, in synaptic junctions. This Rattus norvegicus (Rat) protein is Connector enhancer of kinase suppressor of ras 2 (Cnksr2).